Reading from the N-terminus, the 526-residue chain is Glucose-6-phosphate 1-dehydrogenase (526 aa).

NADP(+) contacts are provided by residues 50–57 (GASGDLAK), Arg-84, and Lys-184. Residues Lys-184, 214–218 (HYLGK), Glu-252, and Asp-271 each bind D-glucose 6-phosphate. His-276 functions as the Proton acceptor in the catalytic mechanism. An NADP(+)-binding site is contributed by Arg-370. D-glucose 6-phosphate-binding residues include Lys-373 and Arg-378. Residues Lys-379, Arg-383, and Arg-406 each coordinate NADP(+). D-glucose 6-phosphate is bound at residue Gln-408. NADP(+)-binding positions include 414–416 (YFK), 434–436 (DLT), Arg-500, Tyr-516, and Trp-522.

It belongs to the glucose-6-phosphate dehydrogenase family.

It localises to the cytoplasm. The protein localises to the cytosol. The enzyme catalyses D-glucose 6-phosphate + NADP(+) = 6-phospho-D-glucono-1,5-lactone + NADPH + H(+). The protein operates within carbohydrate degradation; pentose phosphate pathway; D-ribulose 5-phosphate from D-glucose 6-phosphate (oxidative stage): step 1/3. Functionally, cytosolic glucose-6-phosphate dehydrogenase that catalyzes the first and rate-limiting step of the oxidative branch within the pentose phosphate pathway/shunt, an alternative route to glycolysis for the dissimilation of carbohydrates and a major source of reducing power and metabolic intermediates for fatty acid and nucleic acid biosynthetic processes. This is Glucose-6-phosphate 1-dehydrogenase (ZW) from Ceratitis capitata (Mediterranean fruit fly).